We begin with the raw amino-acid sequence, 565 residues long: Hemagglutinin-neuraminidase (565 aa).

Over 1-20 (MVAEDAPVRGTCRVLFRTTT) the chain is Intravirion. The chain crosses the membrane as a helical span at residues 21-41 (LIFLCTLLALSISILYESLII). The Virion surface portion of the chain corresponds to 42 to 565 (RKQIMSQAGS…VPFIRQVTLS (524 aa)). Residues Asn-110 and Asn-139 are each glycosylated (N-linked (GlcNAc...) asparagine; by host). Cystine bridges form between Cys-161–Cys-185, Cys-175–Cys-236, and Cys-227–Cys-240. Residues 223–228 (NRKSCS) form an involved in neuraminidase activity region. The N-linked (GlcNAc...) asparagine; by host glycan is linked to Asn-267. 3 disulfide bridges follow: Cys-333–Cys-454, Cys-365–Cys-375, and Cys-448–Cys-458. Asn-504 carries N-linked (GlcNAc...) asparagine; by host glycosylation. A disulfide bond links Cys-528 and Cys-539.

The protein belongs to the paramyxoviruses hemagglutinin-neuraminidase family. As to quaternary structure, homotetramer; composed of disulfide-linked homodimers. Interacts with F protein trimer.

It localises to the virion membrane. Its subcellular location is the host cell membrane. It carries out the reaction Hydrolysis of alpha-(2-&gt;3)-, alpha-(2-&gt;6)-, alpha-(2-&gt;8)- glycosidic linkages of terminal sialic acid residues in oligosaccharides, glycoproteins, glycolipids, colominic acid and synthetic substrates.. Attaches the virus to sialic acid-containing cell receptors and thereby initiating infection. Binding of HN protein to the receptor induces a conformational change that allows the F protein to trigger virion/cell membranes fusion. In terms of biological role, neuraminidase activity ensures the efficient spread of the virus by dissociating the mature virions from the neuraminic acid containing glycoproteins. This Canis lupus familiaris (Dog) protein is Hemagglutinin-neuraminidase (HN).